The primary structure comprises 96 residues: Glycine-rich protein DC7.1 (96 aa).

The first 25 residues, 1 to 25 (MGSKIFLLLGLSIAFALLISSEVAA), serve as a signal peptide directing secretion. The interval 29–66 (SETTTEGASLDGGHHGGGGGGHYSGGGGHGGSHHGGGG) is disordered. Tandem repeats lie at residues 42–50 (HHGGGGGGH) and 61–67 (HHGGGGH). The segment at 42 to 67 (HHGGGGGGHYSGGGGHGGSHHGGGGH) is 2 approximate repeats of H-H-G(4,6)-H. Over residues 43-66 (HGGGGGGHYSGGGGHGGSHHGGGG) the composition is skewed to gly residues.

This sequence belongs to the GRP family.

In terms of biological role, may be connected with the initiation of embryogenesis or with the metabolic changes produced by the removal of auxins. In Daucus carota (Wild carrot), this protein is Glycine-rich protein DC7.1.